A 104-amino-acid polypeptide reads, in one-letter code: Large ribosomal subunit protein bL21 (104 aa).

This sequence belongs to the bacterial ribosomal protein bL21 family. As to quaternary structure, part of the 50S ribosomal subunit. Contacts protein L20.

This protein binds to 23S rRNA in the presence of protein L20. The protein is Large ribosomal subunit protein bL21 of Clostridium botulinum (strain ATCC 19397 / Type A).